The sequence spans 344 residues: MIEKIKLTQFTKSAGUAAKIGPEALAQVLCQLEITWNENLLVGLNTNDDAAVYRLNEDIAIVHTVDYFTPVVDDPYDFGQIAAANALSDVYAMGAVPLFALNVVCFPAAYIDVLKEVLRGGNDKVKEAGALIAGGHTIEDEEPKYGLSVTGIVHPEKVIKNSTAKPGDVLILTKPLGIGVINTAIKGEMCPSETYLLAVEVMKYLNKEASEIMKEVGVNACTDITGFGLLGHAYEMAFSSGVTIEFDKDSIPLIEGARELAQMGLIPGGCYRNKKYLKGKVCIKVEEDEVIDLMFDPQTSGGLLISVSEEKAEELYRRLNKKLKFGAFIVGRVKEKQEYDIYVR.

Sec-16 is an active-site residue. A non-standard amino acid (selenocysteine) is located at residue Sec-16. ATP contacts are provided by residues Lys-19 and Thr-46 to Asp-48. Asp-49 is a binding site for Mg(2+). ATP contacts are provided by residues Asp-66, Asp-89, and Gly-135–Thr-137. Asp-89 is a Mg(2+) binding site. Asp-223 lines the Mg(2+) pocket.

The protein belongs to the selenophosphate synthase 1 family. Class I subfamily. Homodimer. It depends on Mg(2+) as a cofactor.

The catalysed reaction is hydrogenselenide + ATP + H2O = selenophosphate + AMP + phosphate + 2 H(+). In terms of biological role, synthesizes selenophosphate from selenide and ATP. The polypeptide is Selenide, water dikinase (Caldanaerobacter subterraneus subsp. tengcongensis (strain DSM 15242 / JCM 11007 / NBRC 100824 / MB4) (Thermoanaerobacter tengcongensis)).